A 346-amino-acid chain; its full sequence is MSEETFPQASALTLLSDPNIDLLSLVAAAGEVRMTYFGRQVMLHRINDIQNGLCPEDCGYCAQSKISDAPIKKYPLKSEEDIIQEAYEAKAKGVYRYCMVSSGRGPTAERTEHLAHIIRRIKNEVGIQTCLSAGLMDHEQAAVLKEAGLDRLNHNLNTSESHTPDIVTTHTFQDRINTLKAARSAGLDLCSGMIAGMGETDQDIVDIAYQLHEYQVPSIPINFLIPISGNPIYDCNQLTPQRCLRILCLFRFVNPKAEIRIGGGREGHLRSLQALALYPANSLFVEGYLATRGHSVDQVYQLIHDAGFEVAGETSLTGDLSATSQFQLDDNPNILNPQTTISFSNS.

Residues 36–265 (YFGRQVMLHR…KAEIRIGGGR (230 aa)) enclose the Radical SAM core domain. Positions 54, 58, and 61 each coordinate [4Fe-4S] cluster. Residues C98, C130, C190, and R260 each coordinate [2Fe-2S] cluster.

Belongs to the radical SAM superfamily. Biotin synthase family. In terms of assembly, homodimer. The cofactor is [4Fe-4S] cluster. It depends on [2Fe-2S] cluster as a cofactor.

The catalysed reaction is (4R,5S)-dethiobiotin + (sulfur carrier)-SH + 2 reduced [2Fe-2S]-[ferredoxin] + 2 S-adenosyl-L-methionine = (sulfur carrier)-H + biotin + 2 5'-deoxyadenosine + 2 L-methionine + 2 oxidized [2Fe-2S]-[ferredoxin]. Its pathway is cofactor biosynthesis; biotin biosynthesis; biotin from 7,8-diaminononanoate: step 2/2. Functionally, catalyzes the conversion of dethiobiotin (DTB) to biotin by the insertion of a sulfur atom into dethiobiotin via a radical-based mechanism. This is Biotin synthase from Acaryochloris marina (strain MBIC 11017).